The sequence spans 54 residues: Pars intercerebralis major peptide D1 (54 aa).

The protein belongs to the granulin family. Six disulfide bonds are present. Brain.

It localises to the secreted. The sequence is that of Pars intercerebralis major peptide D1 from Locusta migratoria (Migratory locust).